The following is a 274-amino-acid chain: NAD kinase (274 aa).

D59 acts as the Proton acceptor in catalysis. Residues 59–60 (DG), K64, 128–129 (ND), D158, 169–174 (TAYALS), and A193 each bind NAD(+).

Belongs to the NAD kinase family. Requires a divalent metal cation as cofactor.

Its subcellular location is the cytoplasm. The enzyme catalyses NAD(+) + ATP = ADP + NADP(+) + H(+). Functionally, involved in the regulation of the intracellular balance of NAD and NADP, and is a key enzyme in the biosynthesis of NADP. Catalyzes specifically the phosphorylation on 2'-hydroxyl of the adenosine moiety of NAD to yield NADP. The sequence is that of NAD kinase from Petrotoga mobilis (strain DSM 10674 / SJ95).